We begin with the raw amino-acid sequence, 328 residues long: uncharacterized protein (328 aa).

This is an uncharacterized protein from Saccharomyces cerevisiae (strain ATCC 204508 / S288c) (Baker's yeast).